Consider the following 757-residue polypeptide: Subtilisin-like protease SBT1.7 (757 aa).

The first 24 residues, Met1–Ser24, serve as a signal peptide directing secretion. The propeptide occupies Ser25–His106. One can recognise an Inhibitor I9 domain in the interval Thr31–His106. Residues Arg102 to Thr610 enclose the Peptidase S8 domain. The Charge relay system role is filled by Asp139. The N-linked (GlcNAc...) asparagine glycan is linked to Asn170. The disordered stretch occupies residues Pro196–Thr219. Residues Asp198–Gly213 are compositionally biased toward basic and acidic residues. His212 serves as the catalytic Charge relay system. 3 N-linked (GlcNAc...) asparagine glycosylation sites follow: Asn352, Asn376, and Asn379. Ser542 serves as the catalytic Charge relay system. Asn631 and Asn644 each carry an N-linked (GlcNAc...) asparagine glycan.

The protein belongs to the peptidase S8 family. Expressed in immature siliques and at lower levels in stems and flowers. Widely expressed at low levels.

The protein localises to the secreted. Its subcellular location is the cell wall. Its activity is regulated as follows. Activated by calcium. Inhibited by the serine protease inhibitors 4-(2-aminoethyl)benzenesulphonyl fluoride (AEBSF), PMSF, di-isopropyl phosphofluoridate (DFP) and soybean trypsin inhibitor (SBTI). Not inhibited by benzamidine or iodoacetamide. Leupeptin and pepstatin A have a minor inhibitory action. Its function is as follows. Serine protease. Has a substrate preference for the hydrophobic residues Phe and Ala and the basic residue Asp in the P1 position, and for Asp, Leu or Ala in the P1' position. Essential for mucilage release from seed coats. Triggers the accumulation and/or activation of cell wall modifying enzymes necessary either for the loosening of the outer primary cell wall, or to facilitate swelling of the mucilage. The chain is Subtilisin-like protease SBT1.7 from Arabidopsis thaliana (Mouse-ear cress).